The following is a 362-amino-acid chain: Cobalt-precorrin-5B C(1)-methyltransferase (362 aa).

This sequence belongs to the CbiD family.

The enzyme catalyses Co-precorrin-5B + S-adenosyl-L-methionine = Co-precorrin-6A + S-adenosyl-L-homocysteine. The protein operates within cofactor biosynthesis; adenosylcobalamin biosynthesis; cob(II)yrinate a,c-diamide from sirohydrochlorin (anaerobic route): step 6/10. In terms of biological role, catalyzes the methylation of C-1 in cobalt-precorrin-5B to form cobalt-precorrin-6A. This is Cobalt-precorrin-5B C(1)-methyltransferase from Burkholderia vietnamiensis (strain G4 / LMG 22486) (Burkholderia cepacia (strain R1808)).